A 669-amino-acid polypeptide reads, in one-letter code: Glutamate--cysteine ligase (669 aa).

This sequence belongs to the glutamate--cysteine ligase type 3 family. As to quaternary structure, heterodimer of a catalytic heavy chain and a regulatory light chain.

The catalysed reaction is L-cysteine + L-glutamate + ATP = gamma-L-glutamyl-L-cysteine + ADP + phosphate + H(+). It participates in sulfur metabolism; glutathione biosynthesis; glutathione from L-cysteine and L-glutamate: step 1/2. Catalyzes the ATP-dependent ligation of L-glutamate and L-cysteine and participates in the first and rate-limiting step in glutathione biosynthesis. In Schizosaccharomyces pombe (strain 972 / ATCC 24843) (Fission yeast), this protein is Glutamate--cysteine ligase (gcs1).